The primary structure comprises 1006 residues: Unconventional myosin-Id (1006 aa).

At A2 the chain carries N-acetylalanine. The Myosin motor domain maps to 9–695; it reads FGKADFVLMD…TLFTLEELRA (687 aa). ATP is bound at residue 102–109; the sequence is GESGAGKT. The residue at position 200 (S200) is a Phosphoserine. Position 536 is a phosphotyrosine (Y536). The actin-binding stretch occupies residues 572–594; it reads MIALVDNLASKEPYYVRCIKPND. IQ domains lie at 699-719 and 721-741; these read IRIV…MRYK and TKAA…SYIH. One can recognise a TH1 domain in the interval 812 to 1005; that stretch reads GQRADLGLQR…RSGFILSVPG (194 aa).

Belongs to the TRAFAC class myosin-kinesin ATPase superfamily. Myosin family. Interacts (via the two IQ motifs) with calmodulin. Binds an additional calmodulin chain via a third, C-terminal region. Interacts with F-actin. Expressed in many tissues. Highest levels in brain, followed by lung and ovary; expression is lowest in spleen.

The protein localises to the cytoplasm. It is found in the perikaryon. The protein resides in the cell projection. Its subcellular location is the dendrite. It localises to the early endosome. The protein localises to the cell cortex. Functionally, unconventional myosin that functions as actin-based motor protein with ATPase activity. Plays a role in endosomal protein trafficking, and especially in the transfer of cargo proteins from early to recycling endosomes. Required for normal planar cell polarity in ciliated tracheal cells, for normal rotational polarity of cilia, and for coordinated, unidirectional ciliary movement in the trachea. Required for normal, polarized cilia organization in brain ependymal epithelial cells. This chain is Unconventional myosin-Id (MYO1D), found in Homo sapiens (Human).